A 263-amino-acid chain; its full sequence is Oxidoreductase UcpA (263 aa).

10 to 32 (LITGASQGIGEGIARVFARHGAN) provides a ligand contact to NAD(+). A substrate-binding site is contributed by serine 141. Tyrosine 155 (proton acceptor) is an active-site residue.

Belongs to the short-chain dehydrogenases/reductases (SDR) family.

This chain is Oxidoreductase UcpA (ucpA), found in Salmonella typhi.